Here is an 801-residue protein sequence, read N- to C-terminus: Xaa-Pro dipeptidyl-peptidase (801 aa).

Active-site charge relay system residues include S371, D491, and H522.

The protein belongs to the peptidase S15 family. In terms of assembly, homodimer.

It is found in the cytoplasm. The catalysed reaction is Hydrolyzes Xaa-Pro-|- bonds to release unblocked, N-terminal dipeptides from substrates including Ala-Pro-|-p-nitroanilide and (sequentially) Tyr-Pro-|-Phe-Pro-|-Gly-Pro-|-Ile.. Functionally, removes N-terminal dipeptides sequentially from polypeptides having unsubstituted N-termini provided that the penultimate residue is proline. The polypeptide is Xaa-Pro dipeptidyl-peptidase (Ligilactobacillus salivarius (strain UCC118) (Lactobacillus salivarius)).